Here is a 1242-residue protein sequence, read N- to C-terminus: MILRPSATFAALSAHVLLRCLWMRVCEASGHFEMQVLSMQNVNGELQSGACCDGARDPAERSCAADQCDTFFRVCLKEYQSRVSSGGPCSYGSGSTPVIGGNTFSVKPLDQTNDKTRIVLPFSFAWPRSYTLIVEALDFNNDSSTGSINGQVIEKAVQSGMINPNRQWQVLKHNGPVAQFQYQIRVTCDEHYFGFGCNKFCRPRDDFFGHYTCDHNGNKTCLEGWAGPECNTAICKQGCSIEHGSCKVPGNCRCLYGWQGEYCDQCIPHPGCVHGTCIEPWQCLCDTNWGGQLCDKDLNTCGTLQPCLNGGTCSNTGPDKYHCACPDGYSGQNCERADNACLSEPCLNGGLCVESSLGFECQCAAGWTGPSCNINEDDCSPNPCNHSGVCVDLVDGFKCICPVQWTGKTCLIDANECEESPCVNAHSCRNLIGGYFCECLPGWTGQNCDINVNDCHGQCLNGGLCKDLVNGYRCVCAAGFAGDRCERDVDECASRPCLNGGRCQDTLNGFQCLCPPGFSGATCQLDLDYCESGPCQNGAQCFSLASDYYCKCPEDYEGKNCSQLKDHCLITPCQVIDSCTVAVVSNSTPGGLRLISSSVCGPHGRCRSHSHAGGHFSCDCQDGFTGTYCHENINDCESSPCLSGGTCIDKINAYQCICADGWEGPNCETNIDDCRTNPCRDRGVCRDLVNDFYCECENGWKGKTCHSRESQCDEDTCNNGGTCSDEGDSFKCLCSPGWEGATCNIAKNSSCLPNPCENGATCVVTGDGFTCVCKEGWEGPTCSQNSNDCNPQPCYNSGTCVDGDNWYRCECASGFAGPDCRININECQSSPCAFGSTCVDEINGYRCLCPPGRTGPRCQEVTGRPCVIGGRIAVDGAKWAEDCNTCYCHKGIVTCTKLFCGPKACRMLGSGRGDCPTGQLCVPVRDEQCFVKPCSSQGECWSAHRPAVRTHCQPDSHCANVTFTFNKDTMPQGVTVEQVCRELRHLYVTKNVTSEFSISVSCELSSAASNEIHVAIHVTENGIHGRVPVKEITDNIIDLVSKHSANSSVIGSIAEVRVQRKQPQNPNVDYMVPLLVSVVTAIWVLALASVFLWCIRHHRKQSSSATAINPTSPFSTPEENTANNAREHLNQIKNHIEKNASNGSLPGKELHCDDKNTVNAKIRTQFPESDASRRLQKTRFPHQPAYMLVDRDDRLSSNGTDIKKHPQWTNKRDNRDLESQHRVPDSQHRDSQHSLQKMEYIV.

The N-terminal stretch at 1–28 is a signal peptide; the sequence is MILRPSATFAALSAHVLLRCLWMRVCEA. The Extracellular portion of the chain corresponds to 29–1070; the sequence is SGHFEMQVLS…KQPQNPNVDY (1042 aa). Asn141 carries an N-linked (GlcNAc...) asparagine glycan. In terms of domain architecture, DSL spans 186–230; sequence VTCDEHYFGFGCNKFCRPRDDFFGHYTCDHNGNKTCLEGWAGPEC. 2 disulfides stabilise this stretch: Cys188/Cys197 and Cys201/Cys213. N-linked (GlcNAc...) asparagine glycosylation is present at Asn218. 39 disulfide bridges follow: Cys221/Cys230, Cys235/Cys246, Cys239/Cys252, Cys254/Cys263, Cys266/Cys277, Cys272/Cys283, Cys285/Cys294, Cys301/Cys313, Cys307/Cys323, Cys325/Cys334, Cys341/Cys352, Cys346/Cys361, Cys363/Cys372, Cys379/Cys390, Cys384/Cys399, Cys401/Cys410, Cys417/Cys428, Cys422/Cys437, Cys439/Cys448, Cys455/Cys465, Cys459/Cys474, Cys476/Cys485, Cys492/Cys503, Cys497/Cys512, Cys514/Cys523, Cys530/Cys541, Cys535/Cys550, Cys552/Cys561, Cys600/Cys618, Cys620/Cys629, Cys636/Cys647, Cys641/Cys656, Cys658/Cys667, Cys674/Cys685, Cys679/Cys694, Cys696/Cys705, Cys712/Cys723, Cys717/Cys732, and Cys734/Cys743. One can recognise an EGF-like 1 domain in the interval 231-264; it reads NTAICKQGCSIEHGSCKVPGNCRCLYGWQGEYCD. The 31-residue stretch at 265-295 folds into the EGF-like 2; atypical domain; it reads QCIPHPGCVHGTCIEPWQCLCDTNWGGQLCD. 2 consecutive EGF-like domains span residues 297–335 and 337–373; these read DLNT…QNCE and ADNA…PSCN. The 37-residue stretch at 375–411 folds into the EGF-like 5; calcium-binding domain; it reads NEDDCSPNPCNHSGVCVDLVDGFKCICPVQWTGKTCL. Asn385 carries N-linked (GlcNAc...) asparagine glycosylation. The EGF-like 6; calcium-binding domain occupies 413-449; sequence DANECEESPCVNAHSCRNLIGGYFCECLPGWTGQNCD. In terms of domain architecture, EGF-like 7; calcium-binding spans 451–486; sequence NVNDCHGQCLNGGLCKDLVNGYRCVCAAGFAGDRCE. Residues 488-524 form the EGF-like 8; calcium-binding domain; it reads DVDECASRPCLNGGRCQDTLNGFQCLCPPGFSGATCQ. EGF-like domains are found at residues 526-562 and 575-630; these read DLDY…KNCS and VIDS…TYCH. Asn560 carries N-linked (GlcNAc...) asparagine glycosylation. In terms of domain architecture, EGF-like 11; calcium-binding spans 632 to 668; it reads NINDCESSPCLSGGTCIDKINAYQCICADGWEGPNCE. Residues 670–706 enclose the EGF-like 12; calcium-binding domain; the sequence is NIDDCRTNPCRDRGVCRDLVNDFYCECENGWKGKTCH. EGF-like domains follow at residues 708–744 and 747–783; these read RESQ…ATCN and KNSS…PTCS. N-linked (GlcNAc...) asparagine glycosylation is present at Asn748. 9 disulfide bridges follow: Cys751/Cys762, Cys756/Cys771, Cys773/Cys782, Cys789/Cys800, Cys794/Cys809, Cys811/Cys820, Cys827/Cys838, Cys832/Cys847, and Cys849/Cys858. An EGF-like 15; calcium-binding domain is found at 785–821; that stretch reads NSNDCNPQPCYNSGTCVDGDNWYRCECASGFAGPDCR. The EGF-like 16; calcium-binding domain occupies 823-859; the sequence is NINECQSSPCAFGSTCVDEINGYRCLCPPGRTGPRCQ. In terms of domain architecture, EGF-like 17 spans 917–959; that stretch reads TGQLCVPVRDEQCFVKPCSSQGECWSAHRPAVRTHCQPDSHCA. N-linked (GlcNAc...) asparagine glycosylation is found at Asn960, Asn991, and Asn1046. A helical membrane pass occupies residues 1071–1095; sequence MVPLLVSVVTAIWVLALASVFLWCI. Residues 1096-1242 are Cytoplasmic-facing; that stretch reads RHHRKQSSSA…HSLQKMEYIV (147 aa). Residues 1191-1242 form a disordered region; sequence RDDRLSSNGTDIKKHPQWTNKRDNRDLESQHRVPDSQHRDSQHSLQKMEYIV. Over residues 1210–1232 the composition is skewed to basic and acidic residues; sequence NKRDNRDLESQHRVPDSQHRDSQ.

The protein localises to the membrane. The protein resides in the cell membrane. Its function is as follows. Ligand for multiple Notch receptors and involved in the mediation of Notch signaling. Seems to be involved in cell-fate decisions. The sequence is that of Protein jagged-1a (jag1a) from Danio rerio (Zebrafish).